An 876-amino-acid chain; its full sequence is DNA polymerase 1 (876 aa).

The protein belongs to the DNA polymerase type-B family.

The enzyme catalyses DNA(n) + a 2'-deoxyribonucleoside 5'-triphosphate = DNA(n+1) + diphosphate. In terms of biological role, this polymerase possesses two enzymatic activities: DNA synthesis (polymerase) and an exonucleolytic activity that degrades single-stranded DNA in the 3'- to 5'-direction. In Sulfolobus acidocaldarius (strain ATCC 33909 / DSM 639 / JCM 8929 / NBRC 15157 / NCIMB 11770), this protein is DNA polymerase 1 (dpo1).